The following is a 462-amino-acid chain: Glycine--tRNA ligase (462 aa).

Substrate-binding residues include Arg100 and Glu175. ATP is bound by residues 207 to 209 (RNE), 217 to 222 (FRTREF), 291 to 292 (EL), and 335 to 338 (GADR). 222 to 226 (FEQME) is a binding site for substrate. Substrate is bound at residue 331 to 335 (EPSLG).

This sequence belongs to the class-II aminoacyl-tRNA synthetase family. In terms of assembly, homodimer.

Its subcellular location is the cytoplasm. The enzyme catalyses tRNA(Gly) + glycine + ATP = glycyl-tRNA(Gly) + AMP + diphosphate. Its function is as follows. Catalyzes the attachment of glycine to tRNA(Gly). The protein is Glycine--tRNA ligase of Clostridium acetobutylicum (strain ATCC 824 / DSM 792 / JCM 1419 / IAM 19013 / LMG 5710 / NBRC 13948 / NRRL B-527 / VKM B-1787 / 2291 / W).